The following is a 192-amino-acid chain: Large ribosomal subunit protein uL6 (192 aa).

It belongs to the universal ribosomal protein uL6 family. Component of the large ribosomal subunit.

The protein resides in the cytoplasm. Functionally, component of the large ribosomal subunit. The ribosome is a large ribonucleoprotein complex responsible for the synthesis of proteins in the cell. This Ictalurus punctatus (Channel catfish) protein is Large ribosomal subunit protein uL6 (rpl9).